We begin with the raw amino-acid sequence, 356 residues long: Phosphoribosylformylglycinamidine cyclo-ligase (356 aa).

Belongs to the AIR synthase family.

It localises to the cytoplasm. It catalyses the reaction 2-formamido-N(1)-(5-O-phospho-beta-D-ribosyl)acetamidine + ATP = 5-amino-1-(5-phospho-beta-D-ribosyl)imidazole + ADP + phosphate + H(+). It participates in purine metabolism; IMP biosynthesis via de novo pathway; 5-amino-1-(5-phospho-D-ribosyl)imidazole from N(2)-formyl-N(1)-(5-phospho-D-ribosyl)glycinamide: step 2/2. This is Phosphoribosylformylglycinamidine cyclo-ligase from Nitrobacter hamburgensis (strain DSM 10229 / NCIMB 13809 / X14).